Here is a 339-residue protein sequence, read N- to C-terminus: uncharacterized protein (339 aa).

This is an uncharacterized protein from Treponema pallidum (strain Nichols).